The chain runs to 382 residues: Cytochrome b (382 aa).

Helical transmembrane passes span 28–48 (YGFLLGIIFFIQILTGVFLAS), 72–94 (WCFRYMHATGASLVFLLTYLHIL), 107–127 (SWISGLIIFALFIVTAFIGYV), and 169–189 (FFVLHFILPFVALCIVFIHIF). Heme b-binding residues include H78 and H92. Residues H173 and H187 each coordinate heme b. H192 contacts a ubiquinone. Helical transmembrane passes span 214–234 (LLSLDVKGFNNIFILFLLQSI), 274–294 (IPSKTAGLLIVLASLQLLFLL), 317–337 (VPMIWFMCSFYALLWIGCQLP), and 340–360 (IFILYGRLFIISFFSSGLFAL).

The protein belongs to the cytochrome b family. The main subunits of complex b-c1 are: cytochrome b, cytochrome c1 and the Rieske protein. It depends on heme b as a cofactor.

The protein resides in the mitochondrion inner membrane. In terms of biological role, component of the ubiquinol-cytochrome c reductase complex (complex III or cytochrome b-c1 complex) that is part of the mitochondrial respiratory chain. The b-c1 complex mediates electron transfer from ubiquinol to cytochrome c. Contributes to the generation of a proton gradient across the mitochondrial membrane that is then used for ATP synthesis. This Plasmodium vivax (strain Salvador I) protein is Cytochrome b (MT-CYB).